The following is a 438-amino-acid chain: uncharacterized protein (438 aa).

2 disordered regions span residues 1-22 and 156-264; these read MRDN…TYDP and DTAK…PWRP. The span at 156 to 170 shows a compositional bias: basic and acidic residues; it reads DTAKSNEKLQGDESK. Low complexity predominate over residues 171–189; it reads SSNGSSSTSTTTQRGSTNS. Residues 191 to 206 are compositionally biased toward basic and acidic residues; it reads TKVKALKIEVKKKSDS.

It belongs to the adhesin P1 family.

This is an uncharacterized protein from Mycoplasma pneumoniae (strain ATCC 29342 / M129 / Subtype 1) (Mycoplasmoides pneumoniae).